Reading from the N-terminus, the 443-residue chain is Cyclic GMP-AMP synthase (443 aa).

Residue S61 participates in ATP binding. Residues D78 and D80 contribute to the active site. D80 serves as a coordination point for Mg(2+). Residue N124 coordinates ATP. Residue D138 is part of the active site. Position 138 (D138) interacts with Mg(2+). Residue L208 coordinates ATP.

It belongs to the CD-NTase family. B06 subfamily. Requires Mg(2+) as cofactor.

It carries out the reaction GTP + ATP = 3',3'-cGAMP + 2 diphosphate. It catalyses the reaction UTP + ATP = 3',3'-cUAMP + 2 diphosphate. The enzyme catalyses 2 ATP = 3',3'-c-di-AMP + 2 diphosphate. The catalysed reaction is 2 GTP = 3',3'-c-di-GMP + 2 diphosphate. It carries out the reaction UTP + GTP = 3',3'-cGMP-UMP + 2 diphosphate. Cyclic nucleotide synthase (second messenger synthase) of a CBASS antivirus system. CBASS (cyclic oligonucleotide-based antiphage signaling system) provides immunity against bacteriophages. The CD-NTase protein (CdnB, this protein) synthesizes cyclic nucleotides in response to infection; these serve as specific second messenger signals. The signals activate a diverse range of effectors, leading to bacterial cell death and thus abortive phage infection. The effector protein for this system is membrane protein Cap15. Its function is as follows. Catalyzes the synthesis of 3',3'-cyclic GMP-AMP (3'3'-cGAMP) from GTP and ATP, a second messenger in cell signal transduction. Also makes cyclic UMP-AMP, cyclic UMP-GMP, cyclic di-AMP and cyclic-di-GMP. In terms of biological role, protects E.coli against phage infection. When the CBASS operon (cdnB-cap15) is introduced in E.coli MG1655 there is about 100-fold protection against phage T2 and about 10-fold protection against phage T5 and T6. This Escherichia albertii protein is Cyclic GMP-AMP synthase.